The primary structure comprises 324 residues: Phospho-N-acetylmuramoyl-pentapeptide-transferase (324 aa).

Transmembrane regions (helical) follow at residues 5–25 (VILF…PIFI), 52–72 (PTMG…VMTM), 77–97 (VSMN…LGFL), 117–137 (LIGQ…QGMP), 147–167 (LSFD…VGGS), 176–196 (LDGL…ILAW), 203–223 (VAIF…FNAH), 227–247 (VFMG…IAIL), 250–270 (LEIL…SVIL), and 302–322 (VVVT…YIEV).

Belongs to the glycosyltransferase 4 family. MraY subfamily. Mg(2+) serves as cofactor.

The protein resides in the cell membrane. It carries out the reaction UDP-N-acetyl-alpha-D-muramoyl-L-alanyl-gamma-D-glutamyl-meso-2,6-diaminopimeloyl-D-alanyl-D-alanine + di-trans,octa-cis-undecaprenyl phosphate = di-trans,octa-cis-undecaprenyl diphospho-N-acetyl-alpha-D-muramoyl-L-alanyl-D-glutamyl-meso-2,6-diaminopimeloyl-D-alanyl-D-alanine + UMP. The protein operates within cell wall biogenesis; peptidoglycan biosynthesis. In terms of biological role, catalyzes the initial step of the lipid cycle reactions in the biosynthesis of the cell wall peptidoglycan: transfers peptidoglycan precursor phospho-MurNAc-pentapeptide from UDP-MurNAc-pentapeptide onto the lipid carrier undecaprenyl phosphate, yielding undecaprenyl-pyrophosphoryl-MurNAc-pentapeptide, known as lipid I. This chain is Phospho-N-acetylmuramoyl-pentapeptide-transferase, found in Bacillus licheniformis (strain ATCC 14580 / DSM 13 / JCM 2505 / CCUG 7422 / NBRC 12200 / NCIMB 9375 / NCTC 10341 / NRRL NRS-1264 / Gibson 46).